Consider the following 232-residue polypeptide: Ribose-5-phosphate isomerase A (232 aa).

Substrate is bound by residues 31-34 (TGST), 88-91 (DGAD), and 101-104 (KGGG). The Proton acceptor role is filled by glutamate 110. Position 128 (lysine 128) interacts with substrate.

The protein belongs to the ribose 5-phosphate isomerase family. In terms of assembly, homodimer.

The catalysed reaction is aldehydo-D-ribose 5-phosphate = D-ribulose 5-phosphate. It participates in carbohydrate degradation; pentose phosphate pathway; D-ribose 5-phosphate from D-ribulose 5-phosphate (non-oxidative stage): step 1/1. Functionally, catalyzes the reversible conversion of ribose-5-phosphate to ribulose 5-phosphate. The chain is Ribose-5-phosphate isomerase A from Lactobacillus johnsonii (strain CNCM I-12250 / La1 / NCC 533).